The sequence spans 351 residues: Modulator of apoptosis 1 (351 aa).

An LIR motif is present at residues tyrosine 49–leucine 52. The tract at residues leucine 120–glutamate 127 is BH3-like. The segment at lysine 202–arginine 205 is RASSF1-binding.

This sequence belongs to the PNMA family. In terms of assembly, homodimer. Under normal circumstances, held in an inactive conformation by an intramolecular interaction. Interacts with BAX. Binding to RASSF1 isoform A (RASSF1A) relieves this inhibitory interaction and allows further binding to BAX. Also binds to BCL2 and BCLX. Recruited to the TNFRSF1A and TNFRSF10A complexes in response to their respective cognate ligand, after internalization. Interacts with TRIM39. Interacts with RASSF6. Interacts with ATG8 proteins MAP1LC3A, MAP1LC3B and MAP1LC3C. Does not interact with ATG8 proteins GABARAPL1, GABARAPL2 and GABARAP. Interacts with SQSTM1; promoting dissociation of SQSTM1 inclusion bodies that sequester KEAP1. Post-translationally, ubiquitinated and degraded during mitotic exit by APC/C-Cdh1, this modification is inhibited by TRIM39. As to expression, widely expressed, with high levels in heart and brain.

The protein localises to the cytoplasm. It is found in the cytosol. Its subcellular location is the mitochondrion outer membrane. It localises to the extracellular vesicle membrane. Its function is as follows. Retrotransposon-derived protein that forms virion-like capsids. Acts as an effector of BAX during apoptosis: enriched at outer mitochondria membrane and associates with BAX upon induction of apoptosis, facilitating BAX-dependent mitochondrial outer membrane permeabilization and apoptosis. Required for death receptor-dependent apoptosis. When associated with RASSF1, promotes BAX conformational change and translocation to mitochondrial membranes in response to TNF and TNFSF10 stimulation. Also promotes autophagy: promotes phagophore closure via association with ATG8 proteins. Acts as an inhibitor of the NFE2L2/NRF2 pathway via interaction with SQSTM1: interaction promotes dissociation of SQSTM1 inclusion bodies that sequester KEAP1, relieving inactivation of the BCR(KEAP1) complex. This is Modulator of apoptosis 1 from Homo sapiens (Human).